The following is a 241-amino-acid chain: Methylosome subunit pICln (241 aa).

The interval 88-112 (EDKEAHMADQEEEESEDDDDDEEPI) is disordered. Positions 97 to 112 (QEEEESEDDDDDEEPI) are enriched in acidic residues.

It belongs to the pICln (TC 1.A.47) family. As to quaternary structure, component of the methylosome, a 20S complex containing at least clns1a/picln, prmt5/skb1 and wdr77/mep50; may mediate snrpd1 and snrpd3 methylation. Forms a 6S pICln-Sm complex composed of clns1a/picln, snrpd1, snrpd2, snrpe, snrpf and snrpg; ring-like structure where clns1a/pICln mimics additional Sm proteins and which is unable to assemble into the core snRNP.

It localises to the cytoplasm. The protein localises to the cytosol. The protein resides in the nucleus. Its subcellular location is the cytoskeleton. Involved in both the assembly of spliceosomal snRNPs and the methylation of Sm proteins. Chaperone that regulates the assembly of spliceosomal U1, U2, U4 and U5 small nuclear ribonucleoproteins (snRNPs), the building blocks of the spliceosome, and thereby plays an important role in the splicing of cellular pre-mRNAs. Most spliceosomal snRNPs contain a common set of Sm proteins SNRPB, SNRPD1, SNRPD2, SNRPD3, SNRPE, SNRPF and SNRPG that assemble in a heptameric protein ring on the Sm site of the small nuclear RNA to form the core snRNP (Sm core). In the cytosol, the Sm proteins SNRPD1, SNRPD2, SNRPE, SNRPF and SNRPG are trapped in an inactive 6S pICln-Sm complex by the chaperone CLNS1A that controls the assembly of the core snRNP. Dissociation by the SMN complex of CLNS1A from the trapped Sm proteins and their transfer to an SMN-Sm complex triggers the assembly of core snRNPs and their transport to the nucleus. The polypeptide is Methylosome subunit pICln (clns1a) (Xenopus laevis (African clawed frog)).